A 309-amino-acid chain; its full sequence is Protein FdhE homolog (309 aa).

This sequence belongs to the FdhE family.

It localises to the cytoplasm. In terms of biological role, necessary for formate dehydrogenase activity. This chain is Protein FdhE homolog, found in Pseudomonas aeruginosa (strain ATCC 15692 / DSM 22644 / CIP 104116 / JCM 14847 / LMG 12228 / 1C / PRS 101 / PAO1).